The chain runs to 321 residues: Endoglucanase 1 (321 aa).

Residues 1 to 27 (MSRKLRTLMAALCALPLAFAAAPPAHA) form the signal peptide. Residue Asp110 is part of the active site. An intrachain disulfide couples Cys112 to Cys156. Asp149 (proton donor) is an active-site residue. The Nucleophile role is filled by Asp295.

Belongs to the glycosyl hydrolase 6 (cellulase B) family.

The catalysed reaction is Endohydrolysis of (1-&gt;4)-beta-D-glucosidic linkages in cellulose, lichenin and cereal beta-D-glucans.. Its function is as follows. Implicated in the mechanism of induction exerted by cellobiose. This Streptomyces halstedii protein is Endoglucanase 1 (celA1).